The following is a 728-amino-acid chain: MADSGSNEEAMKRQAPSVKFDSPSKPDPQQVSQQSNQLSSQKSIQQSTQSKIDPSRIDTKNTTVTTTRPTLDTPPEEEEEKRDGFGNSFEFVLTSLGLAVGLGNIWRFPTRAYNNGGSAFLIPYLTCAFLFGLPAVYFEFLTGQYQGKSPPVIFRRVRPILEGVGWMGVFVAALVAIYYIVIVSWISIYMINICRGHFALWSHCNNDWNNGTSCITMADQYLCKNHTKVMANSTLWNSSLPIPDKMVYFNGACQDANGTDVSTATEQYFMTYIVQPSSGMLDFGGFNWPVFAAMSVCWLLTGLGILKGAKIMGKISYVSVLVPYVLVVVLFINGVFQDGSGVGLEMYFGTPNYTKLYEQDTWTEALKQLCFSLSVGHGGLISLSSYSPKRNNIFRDALIVIIGDTTMSLVGGGAVFATLGYLAKATGQDVKDVVKSGLSLAFVVYPEAMTRMPVPWLWCFIFFLMLFLLGASTEIALVDVFCSCIYDQYPRFRNRKWIVVIAWCSVLYCIGLVFSTRAGYYWFEMFDEYAAGFSSVCTVVCELLVMMYIYGFRNVRDDITEVVGHARNKFTGAIGAHSWYFTANWMVISPSIALILVGLSFVREYPYMGRHDIYPAVFDIFGWFLSFLPVIIVPIFMLLNFIRCRNRGHSYRTLFMLQKQHASYRRIAANYSKDQLALQDQLPDKEPWDEENVDLTDSESESRNAASGDVPIDDVATIDTSSTYHQVY.

At 1–84 (MADSGSNEEA…PEEEEEKRDG (84 aa)) the chain is on the cytoplasmic side. The tract at residues 1–84 (MADSGSNEEA…PEEEEEKRDG (84 aa)) is disordered. Composition is skewed to low complexity over residues 29 to 50 (QQVSQQSNQLSSQKSIQQSTQS) and 60 to 73 (KNTTVTTTRPTLDT). A helical transmembrane segment spans residues 85–105 (FGNSFEFVLTSLGLAVGLGNI). Na(+) contacts are provided by Gly-97, Ala-99, Val-100, and Asn-104. Residues 106-119 (WRFPTRAYNNGGSA) are Extracellular-facing. The chain crosses the membrane as a helical span at residues 120–140 (FLIPYLTCAFLFGLPAVYFEF). Residues 141-162 (LTGQYQGKSPPVIFRRVRPILE) are Cytoplasmic-facing. The chain crosses the membrane as a helical span at residues 163 to 183 (GVGWMGVFVAALVAIYYIVIV). Residues 184–285 (SWISIYMINI…PSSGMLDFGG (102 aa)) lie on the Extracellular side of the membrane. The cysteines at positions 204 and 214 are disulfide-linked. 5 N-linked (GlcNAc...) asparagine glycosylation sites follow: Asn-210, Asn-225, Asn-232, Asn-237, and Asn-257. A helical membrane pass occupies residues 286–306 (FNWPVFAAMSVCWLLTGLGIL). The Cytoplasmic portion of the chain corresponds to 307 to 314 (KGAKIMGK). The helical transmembrane segment at 315–335 (ISYVSVLVPYVLVVVLFINGV) threads the bilayer. At 336-364 (FQDGSGVGLEMYFGTPNYTKLYEQDTWTE) the chain is on the extracellular side. Asn-352 carries N-linked (GlcNAc...) asparagine glycosylation. Residues 365–386 (ALKQLCFSLSVGHGGLISLSSY) traverse the membrane as a helical segment. Ser-372 contacts Na(+). The Cytoplasmic segment spans residues 387-396 (SPKRNNIFRD). Residues 397 to 417 (ALIVIIGDTTMSLVGGGAVFA) traverse the membrane as a helical segment. At 418–451 (TLGYLAKATGQDVKDVVKSGLSLAFVVYPEAMTR) the chain is on the extracellular side. Residues 452–472 (MPVPWLWCFIFFLMLFLLGAS) traverse the membrane as a helical segment. Leu-469 contacts Na(+). The Cytoplasmic segment spans residues 473 to 495 (TEIALVDVFCSCIYDQYPRFRNR). The helical transmembrane segment at 496 to 516 (KWIVVIAWCSVLYCIGLVFST) threads the bilayer. The Extracellular segment spans residues 517–531 (RAGYYWFEMFDEYAA). Residues 532–552 (GFSSVCTVVCELLVMMYIYGF) traverse the membrane as a helical segment. Topologically, residues 553 to 578 (RNVRDDITEVVGHARNKFTGAIGAHS) are cytoplasmic. A helical transmembrane segment spans residues 579–599 (WYFTANWMVISPSIALILVGL). Residues 600–616 (SFVREYPYMGRHDIYPA) lie on the Extracellular side of the membrane. A helical membrane pass occupies residues 617–637 (VFDIFGWFLSFLPVIIVPIFM). The Cytoplasmic portion of the chain corresponds to 638–728 (LLNFIRCRNR…DTSSTYHQVY (91 aa)). Positions 687-699 (PWDEENVDLTDSE) are enriched in acidic residues. Residues 687–728 (PWDEENVDLTDSESESRNAASGDVPIDDVATIDTSSTYHQVY) are disordered. The span at 718-728 (IDTSSTYHQVY) shows a compositional bias: polar residues.

It belongs to the sodium:neurotransmitter symporter (SNF) (TC 2.A.22) family. As to expression, expressed in the INT-9 cells and posterior cells of the alimentary canal of the intestine, gut epithelial cells, the pharynx of some worms, two cells of the rectal gland, and in DVA, DVB and DVC neurons and amphid sensory neurons ASI, ADF and ASK neurons.

It is found in the cell membrane. In terms of biological role, sodium-dependent amino acid transporter that mediates the uptake of the L-enantiomers of various amino acids, including L-proline and L-methionine, and also of acidic amino acids such as L-glutamic acid and L-aspartic acid. May additionally have a role in potassium-dependent amino acid absorption. In response to the availability of amino acid nutrients, may play a role in dauer formation. May play a role in promoting fertility. This chain is Sodium-dependent transporter snf-5, found in Caenorhabditis elegans.